The chain runs to 522 residues: Involucrin (522 aa).

The span at M1–L15 shows a compositional bias: polar residues. Disordered regions lie at residues M1–E126, Q159–Q329, and Q366–L496. Positions E76–H91 are enriched in low complexity. Positions W92–E126 are enriched in basic and acidic residues. The segment covering Q169 to G181 has biased composition (low complexity). Basic and acidic residues-rich tracts occupy residues Q182–Q198, K214–G231, Q252–E264, K274–E290, and Q305–L323. Residues Q375 to Q389 are compositionally biased toward low complexity. Basic and acidic residues-rich tracts occupy residues K391–E401, Q409–A418, and K431–Q465. Over residues Q466–Q479 the composition is skewed to low complexity.

It belongs to the involucrin family. As to quaternary structure, directly or indirectly cross-linked to cornifelin (CNFN). Post-translationally, substrate of transglutaminase. Specific glutamines or lysines are cross-linked to keratins, desmoplakin and to inter involucrin molecules. As to expression, keratinocytes of epidermis and other stratified squamous epithelia.

It is found in the cytoplasm. Its function is as follows. Part of the insoluble cornified cell envelope (CE) of stratified squamous epithelia. In Hylobates lar (Lar gibbon), this protein is Involucrin (IVL).